The chain runs to 101 residues: Small ribosomal subunit protein uS14 (101 aa).

This sequence belongs to the universal ribosomal protein uS14 family. Part of the 30S ribosomal subunit. Contacts proteins S3 and S10.

In terms of biological role, binds 16S rRNA, required for the assembly of 30S particles and may also be responsible for determining the conformation of the 16S rRNA at the A site. This chain is Small ribosomal subunit protein uS14, found in Psychrobacter arcticus (strain DSM 17307 / VKM B-2377 / 273-4).